Consider the following 237-residue polypeptide: MDLLLGIIQGLTEFLPVSSSGHLTLLSHLLKTDLNAYQTAVLHLGTLVSVVLFAFDGIRRSLRSWRIILNLIVSTIPAGVFGVLFEKQIDQLFSSPRFLPLFFSVTALILMFTRYSSSGEKRMENMSFLDALLVGIAQLFALFPGISRSGITVSSLLFMKYRGEDALQYSFLMSIPVVLGAGILGLEKGNVTILAPIFAFLSGLFALYVLSRSVRSGKIWQFSYYCLFVAILSYLVG.

Helical transmembrane passes span 38–58 (QTAV…FDGI), 65–85 (WRII…GVLF), 92–112 (LFSS…ILMF), 126–146 (MSFL…FPGI), 166–186 (ALQY…ILGL), 191–211 (VTIL…YVLS), and 217–237 (GKIW…YLVG).

Belongs to the UppP family.

It localises to the cell inner membrane. The enzyme catalyses di-trans,octa-cis-undecaprenyl diphosphate + H2O = di-trans,octa-cis-undecaprenyl phosphate + phosphate + H(+). Its function is as follows. Catalyzes the dephosphorylation of undecaprenyl diphosphate (UPP). Confers resistance to bacitracin. This chain is Undecaprenyl-diphosphatase, found in Thermotoga sp. (strain RQ2).